Reading from the N-terminus, the 202-residue chain is Glycerol-3-phosphate acyltransferase (202 aa).

The next 4 helical transmembrane spans lie at 11–31 (VLIA…GLIL), 87–107 (PALA…WLGF), 116–136 (FIGV…AIWL), and 158–178 (LILW…LAAL).

Belongs to the PlsY family. As to quaternary structure, probably interacts with PlsX.

It is found in the cell inner membrane. The enzyme catalyses an acyl phosphate + sn-glycerol 3-phosphate = a 1-acyl-sn-glycero-3-phosphate + phosphate. Its pathway is lipid metabolism; phospholipid metabolism. Functionally, catalyzes the transfer of an acyl group from acyl-phosphate (acyl-PO(4)) to glycerol-3-phosphate (G3P) to form lysophosphatidic acid (LPA). This enzyme utilizes acyl-phosphate as fatty acyl donor, but not acyl-CoA or acyl-ACP. This Methylorubrum extorquens (strain PA1) (Methylobacterium extorquens) protein is Glycerol-3-phosphate acyltransferase.